The primary structure comprises 349 residues: 5-deoxyribose 1-phosphate isomerase (349 aa).

Residues 49 to 51 (RGA), Arg-92, and Gln-199 contribute to the substrate site. Residue Asp-240 is the Proton donor of the active site. Residue 250–251 (NK) coordinates substrate.

The protein belongs to the EIF-2B alpha/beta/delta subunits family. DrdI subfamily.

The catalysed reaction is 5-deoxy-alpha-D-ribose 1-phosphate = 5-deoxy-D-ribulose 1-phosphate. Its pathway is carbohydrate degradation. In terms of biological role, catalyzes the isomerization of 5-deoxy-alpha-D-ribose 1-phosphate to 5-deoxy-D-ribulose 1-phosphate, as part of a 5-deoxyribose salvage pathway that recycles this toxic radical SAM enzyme by-product to mainstream metabolites. This is 5-deoxyribose 1-phosphate isomerase from Clostridium botulinum (strain Kyoto / Type A2).